The sequence spans 315 residues: Ribosomal protein L11 methyltransferase (315 aa).

Thr164, Gly185, Asp207, and Asn249 together coordinate S-adenosyl-L-methionine.

It belongs to the methyltransferase superfamily. PrmA family.

Its subcellular location is the cytoplasm. The catalysed reaction is L-lysyl-[protein] + 3 S-adenosyl-L-methionine = N(6),N(6),N(6)-trimethyl-L-lysyl-[protein] + 3 S-adenosyl-L-homocysteine + 3 H(+). Methylates ribosomal protein L11. This is Ribosomal protein L11 methyltransferase from Lactobacillus gasseri (strain ATCC 33323 / DSM 20243 / BCRC 14619 / CIP 102991 / JCM 1131 / KCTC 3163 / NCIMB 11718 / NCTC 13722 / AM63).